The following is a 336-amino-acid chain: Ribosomal RNA large subunit methyltransferase F (336 aa).

The segment covering His-212–Ser-231 has biased composition (basic residues). The disordered stretch occupies residues His-212–Met-234.

Belongs to the methyltransferase superfamily. METTL16/RlmF family.

It localises to the cytoplasm. The catalysed reaction is adenosine(1618) in 23S rRNA + S-adenosyl-L-methionine = N(6)-methyladenosine(1618) in 23S rRNA + S-adenosyl-L-homocysteine + H(+). In terms of biological role, specifically methylates the adenine in position 1618 of 23S rRNA. In Methylobacillus flagellatus (strain ATCC 51484 / DSM 6875 / VKM B-1610 / KT), this protein is Ribosomal RNA large subunit methyltransferase F.